A 337-amino-acid polypeptide reads, in one-letter code: Cytidine deaminase 2 (337 aa).

CMP/dCMP-type deaminase domains are found at residues 43–164 (TDPI…FSSL) and 199–320 (LDCS…LKYL). Residue 84–86 (NVD) participates in substrate binding. A Zn(2+)-binding site is contributed by His-97. The active-site Proton donor is Glu-99. The Zn(2+) site is built by Cys-132 and Cys-135.

This sequence belongs to the cytidine and deoxycytidylate deaminase family. In terms of assembly, homodimer. The cofactor is Zn(2+).

It catalyses the reaction cytidine + H2O + H(+) = uridine + NH4(+). The enzyme catalyses 2'-deoxycytidine + H2O + H(+) = 2'-deoxyuridine + NH4(+). Functionally, this enzyme scavenges exogenous and endogenous cytidine and 2'-deoxycytidine for UMP synthesis. The sequence is that of Cytidine deaminase 2 (CDA2) from Arabidopsis thaliana (Mouse-ear cress).